Reading from the N-terminus, the 392-residue chain is G2/mitotic-specific cyclin-B (392 aa).

Belongs to the cyclin family. Cyclin AB subfamily.

Its function is as follows. Essential for the control of the cell cycle at the G2/M (mitosis) transition. Interacts with the CDC2 protein kinase to form MPF. G2/M cyclins accumulate steadily during G2 and are abruptly destroyed at mitosis. The sequence is that of G2/mitotic-specific cyclin-B from Hydra viridissima (Green hydra).